A 732-amino-acid polypeptide reads, in one-letter code: Prolyl tripeptidyl peptidase (732 aa).

The first 24 residues, 1–24 (MKKTIFQQLFLSVCALTVALPCSA), serve as a signal peptide directing secretion. Active-site charge relay system residues include serine 603, aspartate 678, and histidine 710.

This sequence belongs to the peptidase S9B family.

It carries out the reaction Hydrolysis of Xaa-Xaa-Pro-|-Yaa- releasing the N-terminal tripeptide of a peptide with Pro as the third residue (position P1) and where Yaa is not proline.. Its function is as follows. Serine proteinase. Releases tripeptides from the free amino terminus of proteins. Has a requirement for Pro in the P1 position, but is inactivated by Pro in the P1' position. The polypeptide is Prolyl tripeptidyl peptidase (Porphyromonas gingivalis (strain ATCC 33277 / DSM 20709 / CIP 103683 / JCM 12257 / NCTC 11834 / 2561)).